Reading from the N-terminus, the 165-residue chain is Anaphase-promoting complex subunit 11 (165 aa).

The segment at cysteine 52 to arginine 95 adopts an RING-type; atypical zinc-finger fold.

As to quaternary structure, the APC/C is composed of at least 13 subunits that stay tightly associated throughout the cell cycle: APC1, APC2, APC4, APC5, APC9, APC11, CDC16, CDC23, CDC26, CDC27, DOC1, MND2 and SWM1.

Its pathway is protein modification; protein ubiquitination. Functionally, probably catalytic subunit of the anaphase promoting complex/cyclosome (APC/C), a cell cycle-regulated E3 ubiquitin-protein ligase complex that controls progression through mitosis and the G1 phase of the cell cycle. The APC/C is thought to confer substrate specificity and, in the presence of ubiquitin-conjugating E2 enzymes, it catalyzes the formation of protein-ubiquitin conjugates that are subsequently degraded by the 26S proteasome. In early mitosis, the APC/C is activated by CDC20 and targets securin PDS1, the B-type cyclin CLB5, and other anaphase inhibitory proteins for proteolysis, thereby triggering the separation of sister chromatids at the metaphase-to-anaphase transition. In late mitosis and in G1, degradation of CLB5 allows activation of the APC/C by CDH1, which is needed to destroy CDC20 and the B-type cyclin CLB2 to allow exit from mitosis and creating the low CDK state necessary for cytokinesis and for reforming prereplicative complexes in G1 prior to another round of replication. APC11 is required to recruit the ubiquitin-conjugating enzyme E2 to the APC/C. The sequence is that of Anaphase-promoting complex subunit 11 (APC11) from Saccharomyces cerevisiae (strain ATCC 204508 / S288c) (Baker's yeast).